The following is a 330-amino-acid chain: Pantothenate kinase (330 aa).

108-115 (GSVAVGKS) contributes to the ATP binding site.

The protein belongs to the prokaryotic pantothenate kinase family.

The protein localises to the cytoplasm. It carries out the reaction (R)-pantothenate + ATP = (R)-4'-phosphopantothenate + ADP + H(+). Its pathway is cofactor biosynthesis; coenzyme A biosynthesis; CoA from (R)-pantothenate: step 1/5. This is Pantothenate kinase from Allorhizobium ampelinum (strain ATCC BAA-846 / DSM 112012 / S4) (Agrobacterium vitis (strain S4)).